The sequence spans 327 residues: MATLKDIAIEAGVSLATVSRVLNDDPTLNVKEETKHRILEIAEKLEYKTSSARKLQTGAVNQHHILAIYSYQQELEINDPYYLAIRHGIETQCEKLGIELTNCYEHSGLPDIKNVTGILIVGKPTPALRAAASALTDNICFIDFHEPGSGYDAVDIDLARISKEIIDFYINQGVNRIGFIGGEDEPGKADIREVAFAEYGRLKQVVREEDIWRGGFSSSSGYELAKQMLAREDYPKALFVASDSIAIGVLRAIHERGLNIPQDISLISVNDIPTARFTFPPLSTVRIHSEMMGSQGVNLVYEKARDGRALPLLVFVPSKLKLRGTTR.

An HTH lacI-type domain is found at 1-57 (MATLKDIAIEAGVSLATVSRVLNDDPTLNVKEETKHRILEIAEKLEYKTSSARKLQT). A DNA-binding region (H-T-H motif) is located at residues 4–23 (LKDIAIEAGVSLATVSRVLN).

In terms of biological role, repressor for beta galactosidase alpha and beta subunits (ebgA and ebgC). Binds lactose as an inducer. The protein is HTH-type transcriptional regulator EbgR (ebgR) of Escherichia coli (strain K12).